The following is a 288-amino-acid chain: Protein sprouty homolog 3 (288 aa).

The 114-residue stretch at 154 to 267 (KCVPCTAVRP…PGCRCKRHTN (114 aa)) folds into the SPR domain.

This sequence belongs to the sprouty family. In terms of assembly, interacts with TESK1. Interacts with USP11. Interacts with CAV1 (via C-terminus). Expressed in the brain with expression the highest in Purkinje cell bodies and projections in the cerebellum (at protein level). Also expressed in central and peripheral nervous system ganglion cells, superior cervical ganglion and dorsal root ganglion (at protein level). Expressed in the retinal ganglion cell layer and the inner nuclear layer (at protein level).

It localises to the cytoplasm. Functionally, inhibits neurite branching, arbor length and neurite complexity. Inhibits EGF-mediated p42/44 ERK signaling. Negatively regulates the MAPK cascade, resulting in a reduction of extracellular matrix protein accumulation. May function as an antagonist of fibroblast growth factor (FGF) pathways and may negatively modulate respiratory organogenesis. The sequence is that of Protein sprouty homolog 3 from Mus musculus (Mouse).